The primary structure comprises 569 residues: Urease subunit beta (569 aa).

In terms of domain architecture, Urease spans 131 to 569 (GGIDTHIHFI…VSLAQLFSIF (439 aa)). H136, H138, and K219 together coordinate Ni(2+). N6-carboxylysine is present on K219. A substrate-binding site is contributed by H221. The Ni(2+) site is built by H248 and H274. H322 (proton donor) is an active-site residue. D362 contacts Ni(2+).

It belongs to the metallo-dependent hydrolases superfamily. Urease alpha subunit family. As to quaternary structure, heterohexamer of 3 UreA (alpha) and 3 UreB (beta) subunits. Ni cation serves as cofactor. Post-translationally, carboxylation allows a single lysine to coordinate two nickel ions.

It localises to the cytoplasm. It carries out the reaction urea + 2 H2O + H(+) = hydrogencarbonate + 2 NH4(+). It participates in nitrogen metabolism; urea degradation; CO(2) and NH(3) from urea (urease route): step 1/1. This Helicobacter pylori (strain P12) protein is Urease subunit beta.